The primary structure comprises 147 residues: MEQTYVMVKPDGVERGLIGEIVTRIEKKGLKIVAGKLMQIDRELAEKHYAEHIGKSFFEDLIGFITSGPVFAMVLEGDDAIATARRMMGKTNPLEADPGTIRADYAVHTNRNVIHGSDSPESAKREIQLFFAPQEILSYQKAIDTWI.

Positions 9, 57, 85, 91, 102, and 112 each coordinate ATP. The active-site Pros-phosphohistidine intermediate is the H115.

It belongs to the NDK family. As to quaternary structure, homotetramer. Requires Mg(2+) as cofactor.

The protein localises to the cytoplasm. It carries out the reaction a 2'-deoxyribonucleoside 5'-diphosphate + ATP = a 2'-deoxyribonucleoside 5'-triphosphate + ADP. The catalysed reaction is a ribonucleoside 5'-diphosphate + ATP = a ribonucleoside 5'-triphosphate + ADP. Major role in the synthesis of nucleoside triphosphates other than ATP. The ATP gamma phosphate is transferred to the NDP beta phosphate via a ping-pong mechanism, using a phosphorylated active-site intermediate. The chain is Nucleoside diphosphate kinase from Listeria monocytogenes serotype 4b (strain CLIP80459).